The primary structure comprises 353 residues: Rhodopsin (353 aa).

At 1–36 (MNGTEGENFYIPFSNKTGLARSPFEYPQYYLAEPWK) the chain is on the extracellular side. N-linked (GlcNAc...) asparagine glycans are attached at residues asparagine 2 and asparagine 15. Residues 37-61 (YSVLAAYMFFLILVGFPVNFLTLFV) form a helical membrane-spanning segment. Residues 62–73 (TVQHKKLRTPLN) are Cytoplasmic-facing. A helical transmembrane segment spans residues 74 to 96 (YILLNLAVANLFMVLFGFTLTMY). Topologically, residues 97 to 110 (SSMNGYFVFGPTMC) are extracellular. Cysteine 110 and cysteine 187 are joined by a disulfide. The helical transmembrane segment at 111-133 (NFEGFFATLGGEMSLWSLVVLAI) threads the bilayer. Residues 134-136 (ERY) carry the 'Ionic lock' involved in activated form stabilization motif. Topologically, residues 134–152 (ERYIVICKPMGNFRFGSTH) are cytoplasmic. A helical membrane pass occupies residues 153-173 (AYMGVAFTWFMALSCAAPPLV). The Extracellular segment spans residues 174 to 202 (GWSRYLPEGMQCSCGPDYYTLNPNFNNES). Residues 203 to 224 (FVIYMFLVHFIIPFIVIFFCYG) traverse the membrane as a helical segment. Over 225–252 (RLLCTVKEAAAAQQESASTQKAEKEVTR) the chain is Cytoplasmic. Residues 253 to 274 (MVVLMVIGFLVCWVPYASVAFY) traverse the membrane as a helical segment. Topologically, residues 275–286 (IFTHQGSDFGAT) are extracellular. The chain crosses the membrane as a helical span at residues 287 to 308 (FMTVPAFFAKTSALYNPIIYIL). Position 296 is an N6-(retinylidene)lysine (lysine 296). The Cytoplasmic portion of the chain corresponds to 309–353 (MNKQFRNCMITTLCCGKNPLGDEDSGASTSKTEVSSVSTSQVSPA). The interval 330–353 (DEDSGASTSKTEVSSVSTSQVSPA) is disordered. A compositionally biased stretch (low complexity) spans 336–353 (STSKTEVSSVSTSQVSPA).

This sequence belongs to the G-protein coupled receptor 1 family. Opsin subfamily. In terms of processing, phosphorylated on some or all of the serine and threonine residues present in the C-terminal region. Contains one covalently linked retinal chromophore.

The protein resides in the membrane. Its subcellular location is the cell projection. It is found in the cilium. The protein localises to the photoreceptor outer segment. In terms of biological role, photoreceptor required for image-forming vision at low light intensity. While most salt water fish species use retinal as chromophore, most freshwater fish use 3-dehydroretinal, or a mixture of retinal and 3-dehydroretinal. Light-induced isomerization of 11-cis to all-trans retinal triggers a conformational change that activates signaling via G-proteins. Subsequent receptor phosphorylation mediates displacement of the bound G-protein alpha subunit by arrestin and terminates signaling. The chain is Rhodopsin (RHO) from Petromyzon marinus (Sea lamprey).